A 306-amino-acid chain; its full sequence is GTPase Era (306 aa).

Residues 14-181 (KSGFIGIIGR…LDELWKYLPE (168 aa)) enclose the Era-type G domain. Residues 22 to 29 (GRPNVGKS) form a G1 region. 22–29 (GRPNVGKS) contacts GTP. The interval 48–52 (QTTRN) is G2. The tract at residues 69–72 (DTPG) is G3. GTP is bound by residues 69–73 (DTPGI) and 131–134 (NKID). The interval 131–134 (NKID) is G4. Positions 160 to 162 (ISA) are G5. The region spanning 212–290 (THKEIPYSSA…FLELFVRVRK (79 aa)) is the KH type-2 domain.

The protein belongs to the TRAFAC class TrmE-Era-EngA-EngB-Septin-like GTPase superfamily. Era GTPase family. As to quaternary structure, monomer.

It is found in the cytoplasm. Its subcellular location is the cell inner membrane. Its function is as follows. An essential GTPase that binds both GDP and GTP, with rapid nucleotide exchange. Plays a role in 16S rRNA processing and 30S ribosomal subunit biogenesis and possibly also in cell cycle regulation and energy metabolism. This chain is GTPase Era, found in Syntrophus aciditrophicus (strain SB).